The chain runs to 197 residues: Allatostatins (197 aa).

An N-terminal signal peptide occupies residues 1–27 (MRSRTSVLTSSLAFLYFFGIVGRSALA). A propeptide spanning residues 28-56 (MEETPASSMNLQHYNNMLNPMVFDDTMPE) is cleaved from the precursor. Isoleucine amide is present on I76. Positions 80–86 (WIDTNDN) are excised as a propeptide. A leucine amide mark is found at L96, L106, L154, and L184. The tract at residues 161–197 (YSGGQPLGSKRPNDMLSQRYHFGLGKRMSEDEEESSQ) is disordered. A propeptide spanning residues 188-197 (MSEDEEESSQ) is cleaved from the precursor.

This sequence belongs to the allatostatin family.

Its subcellular location is the secreted. Functionally, neuropeptides. The sequence is that of Allatostatins from Apis mellifera (Honeybee).